A 94-amino-acid chain; its full sequence is Large ribosomal subunit protein uL23 (94 aa).

Belongs to the universal ribosomal protein uL23 family. In terms of assembly, part of the 50S ribosomal subunit. Contacts protein L29, and trigger factor when it is bound to the ribosome.

In terms of biological role, one of the early assembly proteins it binds 23S rRNA. One of the proteins that surrounds the polypeptide exit tunnel on the outside of the ribosome. Forms the main docking site for trigger factor binding to the ribosome. The protein is Large ribosomal subunit protein uL23 of Ligilactobacillus salivarius (strain UCC118) (Lactobacillus salivarius).